Reading from the N-terminus, the 84-residue chain is Hydramacin-1 (84 aa).

An N-terminal signal peptide occupies residues 1–24 (MRTVVFFILVSIFLVALKPTGTQA). Gln25 is modified (pyrrolidone carboxylic acid). Disulfide bonds link Cys29–Cys72, Cys36–Cys65, Cys51–Cys81, and Cys55–Cys83.

In terms of tissue distribution, expressed in the endodermal epithelium.

The protein localises to the secreted. It is found in the target cell membrane. Cationic antimicrobial peptide potently active against Gram-positive and Gram-negative bacteria including multi-resistant human pathogenic strains. Is not active against the Gram-positive Coccus species, Gram-negative non-fermentation species and against the fungus C.albicans. It leads to aggregation of bacteria as an initial step of its bactericidal mechanism. Aggregated cells are connected via electron-dense contacts and adopt a thorn apple-like morphology. Hydramycin contains a belt of positively charged residues that separate two hydrophobic areas. This structure may explain the observed aggregation of bacteria, since each of these areas can immerse into the outer leaflets of the membranes of two individual bacteria. Is able to permeabilize membranes of viable bacteria at low and neutral pH values, but no pore-forming activity is not detected. This Hydra vulgaris (Hydra) protein is Hydramacin-1.